Reading from the N-terminus, the 190-residue chain is Pancreatic IgW, short secretory form (190 aa).

Residues 53–145 (PNITALVPSV…PPSNFRSMIS (93 aa)) form the Ig-like C1-type domain. The N-linked (GlcNAc...) asparagine glycan is linked to N54. The cysteines at positions 74 and 131 are disulfide-linked. N179 is a glycosylation site (N-linked (GlcNAc...) asparagine).

In terms of tissue distribution, expressed in pancreas, spleen, epigonal organ and at low levels in several other tissues.

The protein localises to the secreted. The sequence is that of Pancreatic IgW, short secretory form from Ginglymostoma cirratum (Nurse shark).